A 199-amino-acid polypeptide reads, in one-letter code: Ribonuclease HII (199 aa).

Residues 10 to 199 (HLVAGVDEVG…VKRALGLASN (190 aa)) enclose the RNase H type-2 domain. Residues aspartate 16, glutamate 17, and aspartate 108 each coordinate a divalent metal cation.

Belongs to the RNase HII family. Mn(2+) serves as cofactor. The cofactor is Mg(2+).

It is found in the cytoplasm. It catalyses the reaction Endonucleolytic cleavage to 5'-phosphomonoester.. In terms of biological role, endonuclease that specifically degrades the RNA of RNA-DNA hybrids. The sequence is that of Ribonuclease HII from Klebsiella pneumoniae (strain 342).